Here is a 180-residue protein sequence, read N- to C-terminus: 4-hydroxy-3-methylbut-2-enyl diphosphate reductase (180 aa).

Cys12 serves as a coordination point for [4Fe-4S] cluster. Residues His41 and His74 each contribute to the (2E)-4-hydroxy-3-methylbut-2-enyl diphosphate site. His41 and His74 together coordinate dimethylallyl diphosphate. Isopentenyl diphosphate-binding residues include His41 and His74. A [4Fe-4S] cluster-binding site is contributed by Cys96. Residue His124 participates in (2E)-4-hydroxy-3-methylbut-2-enyl diphosphate binding. Dimethylallyl diphosphate is bound at residue His124. His124 contacts isopentenyl diphosphate. Glu126 acts as the Proton donor in catalysis. Thr168 is a binding site for (2E)-4-hydroxy-3-methylbut-2-enyl diphosphate.

This sequence belongs to the IspH family. [4Fe-4S] cluster is required as a cofactor.

The enzyme catalyses isopentenyl diphosphate + 2 oxidized [2Fe-2S]-[ferredoxin] + H2O = (2E)-4-hydroxy-3-methylbut-2-enyl diphosphate + 2 reduced [2Fe-2S]-[ferredoxin] + 2 H(+). It catalyses the reaction dimethylallyl diphosphate + 2 oxidized [2Fe-2S]-[ferredoxin] + H2O = (2E)-4-hydroxy-3-methylbut-2-enyl diphosphate + 2 reduced [2Fe-2S]-[ferredoxin] + 2 H(+). It functions in the pathway isoprenoid biosynthesis; dimethylallyl diphosphate biosynthesis; dimethylallyl diphosphate from (2E)-4-hydroxy-3-methylbutenyl diphosphate: step 1/1. The protein operates within isoprenoid biosynthesis; isopentenyl diphosphate biosynthesis via DXP pathway; isopentenyl diphosphate from 1-deoxy-D-xylulose 5-phosphate: step 6/6. In terms of biological role, catalyzes the conversion of 1-hydroxy-2-methyl-2-(E)-butenyl 4-diphosphate (HMBPP) into a mixture of isopentenyl diphosphate (IPP) and dimethylallyl diphosphate (DMAPP). Acts in the terminal step of the DOXP/MEP pathway for isoprenoid precursor biosynthesis. This is 4-hydroxy-3-methylbut-2-enyl diphosphate reductase from Pseudomonas fluorescens.